The chain runs to 976 residues: Ubiquitin ligase-binding protein BUL1 (976 aa).

The segment at 1-65 is disordered; sequence MAKDLNDSGF…SPSLHSPKSW (65 aa). Polar residues predominate over residues 23–39; that stretch reads SDFTANSSTTMNVNANT. The segment covering 53–64 has biased composition (low complexity); it reads SSRSPSLHSPKS. Phosphoserine is present on residues S58 and S70. 3 disordered regions span residues 82-124, 145-196, and 857-878; these read LAHS…DGDI, PQGN…SSST, and SEDS…ASLT. The short motif at 156 to 160 is the PY-motif element; sequence FPPSY. A compositionally biased stretch (low complexity) spans 163–176; it reads ANNSTATGAAGSSA. Polar residues predominate over residues 177 to 196; it reads DLSHQSLSTDALGATRSSST. Low complexity predominate over residues 862–878; the sequence is SHTGNGSSSSPSSASLT.

This sequence belongs to the BUL1 family. As to quaternary structure, component of the RSP5-BUL1/2 ubiquitin ligase complex composed of at least RSP5 and BUL1 or BUL2.

The protein resides in the cytoplasm. It participates in protein modification; protein ubiquitination. Functionally, component of a RSP5 ubiquitin ligase complex which specifies polyubiquitination and intracellular trafficking of the general amino acid permease GAP1 as well as other permeases such as PMA1. The RSP5-BUL1/2 complex is also necessary for the heat-shock element (HSE)-mediated gene expression, nitrogen starvation GLN3-dependent transcription and pressure-induced differential regulation of the 2 tryptophan permeases TAT1 and TAT2. The protein is Ubiquitin ligase-binding protein BUL1 (BUL1) of Saccharomyces cerevisiae (strain ATCC 204508 / S288c) (Baker's yeast).